The chain runs to 371 residues: Solute carrier family 35 member F6 (371 aa).

Residues methionine 1–alanine 25 form the signal peptide. A run of 2 helical transmembrane segments spans residues phenylalanine 48–leucine 68 and leucine 89–leucine 109. The EamA domain maps to leucine 104–leucine 160. Asparagine 110 is a glycosylation site (N-linked (GlcNAc...) asparagine). 7 helical membrane passes run phenylalanine 117–glycine 137, leucine 140–leucine 160, valine 176–leucine 196, glycine 216–glycine 236, leucine 261–isoleucine 281, leucine 295–tryptophan 312, and alanine 317–leucine 336. Positions glycine 347–serine 371 are disordered. Position 365 is a phosphothreonine (threonine 365).

The protein belongs to the SLC35F solute transporter family. As to quaternary structure, interacts with SLC25A5.

The protein localises to the mitochondrion. It localises to the lysosome membrane. In terms of biological role, involved in the maintenance of mitochondrial membrane potential in pancreatic ductal adenocarcinoma (PDAC) cells. Promotes pancreatic ductal adenocarcinoma (PDAC) cell growth. May play a role as a nucleotide-sugar transporter. The sequence is that of Solute carrier family 35 member F6 (SLC35F6) from Pongo abelii (Sumatran orangutan).